Reading from the N-terminus, the 489-residue chain is ERO1-like protein alpha (489 aa).

The signal sequence occupies residues Met-1–Ala-20. Disulfide bonds link Cys-27-Cys-40, Cys-29-Cys-38, Cys-77-Cys-382, Cys-86-Cys-91, Cys-86-Cys-123, Cys-91-Cys-96, Cys-200-Cys-232, and Cys-385-Cys-388. Residues Arg-179, Thr-181, and Trp-192 each contribute to the FAD site. FAD is bound by residues Ser-243 and His-246. Residue Asn-271 is glycosylated (N-linked (GlcNAc...) asparagine). 2 residues coordinate FAD: Arg-278 and Arg-291. The N-linked (GlcNAc...) asparagine glycan is linked to Asn-375.

This sequence belongs to the EROs family. As to quaternary structure, predominantly monomer. May function both as a monomer and a homodimer. FAD serves as cofactor. In terms of processing, the Cys-86/Cys-91 and Cys-385/Cys-388 disulfide bonds constitute the redox-active center. The Cys-86/Cys-91 disulfide bond may accept electron from protein disulfide isomerase (PDI) and funnel them to the active site disulfide Cys-385/Cys-388.

It localises to the endoplasmic reticulum membrane. With respect to regulation, enzyme activity is tightly regulated to prevent the accumulation of reactive oxygen species in the endoplasmic reticulum. Reversibly down-regulated by the formation of disulfide bonds between the active site Cys-86 and Cys-123, and between Cys-91 and Cys-96. Glutathione may be required to regulate its activity in the endoplasmic reticulum. Its function is as follows. Oxidoreductase involved in disulfide bond formation in the endoplasmic reticulum. Efficiently reoxidizes P4HB/PDI, the enzyme catalyzing protein disulfide formation, in order to allow P4HB to sustain additional rounds of disulfide formation. Following P4HB reoxidation, passes its electrons to molecular oxygen via FAD, leading to the production of reactive oxygen species (ROS) in the cell. Required for the folding of immunoglobulins. This chain is ERO1-like protein alpha, found in Danio rerio (Zebrafish).